The primary structure comprises 159 residues: Ribosomal RNA large subunit methyltransferase H (159 aa).

S-adenosyl-L-methionine-binding positions include Leu76, Gly108, and Phe127–Phe132.

The protein belongs to the RNA methyltransferase RlmH family. As to quaternary structure, homodimer.

It localises to the cytoplasm. The enzyme catalyses pseudouridine(1915) in 23S rRNA + S-adenosyl-L-methionine = N(3)-methylpseudouridine(1915) in 23S rRNA + S-adenosyl-L-homocysteine + H(+). Specifically methylates the pseudouridine at position 1915 (m3Psi1915) in 23S rRNA. The chain is Ribosomal RNA large subunit methyltransferase H from Bifidobacterium longum subsp. infantis (strain ATCC 15697 / DSM 20088 / JCM 1222 / NCTC 11817 / S12).